The primary structure comprises 389 residues: TelA-like protein SH1505 (389 aa).

It belongs to the TelA family.

This is TelA-like protein SH1505 from Staphylococcus haemolyticus (strain JCSC1435).